Consider the following 71-residue polypeptide: Putative membrane protein insertion efficiency factor (71 aa).

The protein belongs to the UPF0161 family.

It localises to the cell inner membrane. Its function is as follows. Could be involved in insertion of integral membrane proteins into the membrane. The protein is Putative membrane protein insertion efficiency factor of Nitrosospira multiformis (strain ATCC 25196 / NCIMB 11849 / C 71).